A 401-amino-acid polypeptide reads, in one-letter code: Tyrosine--tRNA ligase (401 aa).

Residues 45 to 54 carry the 'HIGH' region motif; sequence PTAPDLHLGH. A 'KMSKS' region motif is present at residues 230–234; sequence KMSKS. K233 serves as a coordination point for ATP. Residues 339–399 enclose the S4 RNA-binding domain; sequence IWLAKALVEC…GKRKFAKLKV (61 aa).

Belongs to the class-I aminoacyl-tRNA synthetase family. TyrS type 2 subfamily. Homodimer.

It is found in the cytoplasm. The enzyme catalyses tRNA(Tyr) + L-tyrosine + ATP = L-tyrosyl-tRNA(Tyr) + AMP + diphosphate + H(+). Catalyzes the attachment of tyrosine to tRNA(Tyr) in a two-step reaction: tyrosine is first activated by ATP to form Tyr-AMP and then transferred to the acceptor end of tRNA(Tyr). The sequence is that of Tyrosine--tRNA ligase from Campylobacter jejuni (strain RM1221).